We begin with the raw amino-acid sequence, 456 residues long: tRNA(Ile)-lysidine synthase (456 aa).

27–32 (SGGVDS) lines the ATP pocket.

The protein belongs to the tRNA(Ile)-lysidine synthase family.

Its subcellular location is the cytoplasm. The catalysed reaction is cytidine(34) in tRNA(Ile2) + L-lysine + ATP = lysidine(34) in tRNA(Ile2) + AMP + diphosphate + H(+). Ligates lysine onto the cytidine present at position 34 of the AUA codon-specific tRNA(Ile) that contains the anticodon CAU, in an ATP-dependent manner. Cytidine is converted to lysidine, thus changing the amino acid specificity of the tRNA from methionine to isoleucine. The chain is tRNA(Ile)-lysidine synthase from Vibrio atlanticus (strain LGP32) (Vibrio splendidus (strain Mel32)).